A 197-amino-acid polypeptide reads, in one-letter code: Xanthine phosphoribosyltransferase (197 aa).

Positions 20 and 27 each coordinate xanthine. Position 128–132 (128–132) interacts with 5-phospho-alpha-D-ribose 1-diphosphate; it reads ANGQA. Lys-156 contributes to the xanthine binding site.

It belongs to the purine/pyrimidine phosphoribosyltransferase family. Xpt subfamily. As to quaternary structure, homodimer.

Its subcellular location is the cytoplasm. It carries out the reaction XMP + diphosphate = xanthine + 5-phospho-alpha-D-ribose 1-diphosphate. It functions in the pathway purine metabolism; XMP biosynthesis via salvage pathway; XMP from xanthine: step 1/1. Functionally, converts the preformed base xanthine, a product of nucleic acid breakdown, to xanthosine 5'-monophosphate (XMP), so it can be reused for RNA or DNA synthesis. The protein is Xanthine phosphoribosyltransferase of Bacillus cereus (strain ATCC 10987 / NRS 248).